A 361-amino-acid chain; its full sequence is tRNA-specific 2-thiouridylase MnmA (361 aa).

ATP is bound by residues 11–18 (GMSGGVDS) and methionine 37. Residues 97 to 99 (NPD) are interaction with target base in tRNA. Catalysis depends on cysteine 102, which acts as the Nucleophile. Cysteine 102 and cysteine 199 are oxidised to a cystine. Glycine 126 contacts ATP. The segment at 149–151 (KDQ) is interaction with tRNA. Catalysis depends on cysteine 199, which acts as the Cysteine persulfide intermediate. The interval 311 to 312 (RY) is interaction with tRNA.

The protein belongs to the MnmA/TRMU family.

The protein resides in the cytoplasm. The enzyme catalyses S-sulfanyl-L-cysteinyl-[protein] + uridine(34) in tRNA + AH2 + ATP = 2-thiouridine(34) in tRNA + L-cysteinyl-[protein] + A + AMP + diphosphate + H(+). Its function is as follows. Catalyzes the 2-thiolation of uridine at the wobble position (U34) of tRNA, leading to the formation of s(2)U34. The protein is tRNA-specific 2-thiouridylase MnmA of Cupriavidus necator (strain ATCC 17699 / DSM 428 / KCTC 22496 / NCIMB 10442 / H16 / Stanier 337) (Ralstonia eutropha).